The chain runs to 411 residues: Small ribosomal subunit protein bS1c (411 aa).

Residues 1–41 (MASLAQQLAGGLRCPPLSNSNLSKPFSPKHTLKPRFSPIVS) constitute a chloroplast transit peptide. S1 motif domains follow at residues 96 to 166 (GSRV…LSLR), 184 to 248 (DVVV…MSNR), and 261 to 329 (GSVV…LSTK).

This sequence belongs to the bacterial ribosomal protein bS1 family. Component of the chloroplast small ribosomal subunit (SSU). Mature 70S chloroplast ribosomes of higher plants consist of a small (30S) and a large (50S) subunit. The 30S small subunit contains 1 molecule of ribosomal RNA (16S rRNA) and 24 different proteins. The 50S large subunit contains 3 rRNA molecules (23S, 5S and 4.5S rRNA) and 33 different proteins.

The protein localises to the plastid. It is found in the chloroplast. Its function is as follows. Component of the chloroplast ribosome (chloro-ribosome), a dedicated translation machinery responsible for the synthesis of chloroplast genome-encoded proteins, including proteins of the transcription and translation machinery and components of the photosynthetic apparatus. Actively engaged in the initiation complex formation via a strong mRNA-binding activity. Possesses a poly(A)-binding activity which might play a role as a control element in chloroplast mRNA translation. The protein is Small ribosomal subunit protein bS1c (RPS1) of Spinacia oleracea (Spinach).